The sequence spans 439 residues: Mitochondrial distribution and morphology protein 12 (439 aa).

The 439-residue stretch at 1–439 (MSIDVNWRFA…VYPSFWTFLI (439 aa)) folds into the SMP-LTD domain. Disordered stretches follow at residues 70-103 (YEEDDDDHTSDASEERGEEHSSRWNSTHPELNEP), 185-274 (GWSD…PPRM), and 354-386 (PEQQQQRESAGDDHRPQSRPDSSASASQKRHGG). Over residues 78-91 (TSDASEERGEEHSS) the composition is skewed to basic and acidic residues. A compositionally biased stretch (polar residues) spans 215 to 245 (DTSNSTSRPSTANTLPSHPSGSSKNSGQAAT). 2 stretches are compositionally biased toward basic and acidic residues: residues 247-261 (RNDHPSLHAGEHLED) and 362-371 (SAGDDHRPQS).

This sequence belongs to the MDM12 family. In terms of assembly, component of the ER-mitochondria encounter structure (ERMES) or MDM complex, composed of mmm1, mdm10, mdm12 and mdm34. A mmm1 homodimer associates with one molecule of mdm12 on each side in a pairwise head-to-tail manner, and the SMP-LTD domains of mmm1 and mdm12 generate a continuous hydrophobic tunnel for phospholipid trafficking.

It localises to the mitochondrion outer membrane. The protein resides in the endoplasmic reticulum membrane. In terms of biological role, component of the ERMES/MDM complex, which serves as a molecular tether to connect the endoplasmic reticulum (ER) and mitochondria. Components of this complex are involved in the control of mitochondrial shape and protein biogenesis, and function in nonvesicular lipid trafficking between the ER and mitochondria. Mdm12 is required for the interaction of the ER-resident membrane protein mmm1 and the outer mitochondrial membrane-resident beta-barrel protein mdm10. The mdm12-mmm1 subcomplex functions in the major beta-barrel assembly pathway that is responsible for biogenesis of all mitochondrial outer membrane beta-barrel proteins, and acts in a late step after the SAM complex. The mdm10-mdm12-mmm1 subcomplex further acts in the TOM40-specific pathway after the action of the mdm12-mmm1 complex. Essential for establishing and maintaining the structure of mitochondria and maintenance of mtDNA nucleoids. This Aspergillus fumigatus (strain CBS 144.89 / FGSC A1163 / CEA10) (Neosartorya fumigata) protein is Mitochondrial distribution and morphology protein 12.